We begin with the raw amino-acid sequence, 660 residues long: Elongation factor 4 (660 aa).

One can recognise a tr-type G domain in the interval 55–241 (AQIRNFCIIA…EVVRQVPPPQ (187 aa)). Residues 67-72 (DHGKST) and 188-191 (NKID) contribute to the GTP site.

This sequence belongs to the TRAFAC class translation factor GTPase superfamily. Classic translation factor GTPase family. LepA subfamily.

Its subcellular location is the cell membrane. It catalyses the reaction GTP + H2O = GDP + phosphate + H(+). Its function is as follows. Required for accurate and efficient protein synthesis under certain stress conditions. May act as a fidelity factor of the translation reaction, by catalyzing a one-codon backward translocation of tRNAs on improperly translocated ribosomes. Back-translocation proceeds from a post-translocation (POST) complex to a pre-translocation (PRE) complex, thus giving elongation factor G a second chance to translocate the tRNAs correctly. Binds to ribosomes in a GTP-dependent manner. The chain is Elongation factor 4 from Mycolicibacterium paratuberculosis (strain ATCC BAA-968 / K-10) (Mycobacterium paratuberculosis).